Here is a 235-residue protein sequence, read N- to C-terminus: Ribosomal RNA-processing protein 17 (235 aa).

Residues 49-110 (QRQKKAQEFI…AKNDKTEDLQ (62 aa)) are a coiled coil. A compositionally biased stretch (basic and acidic residues) spans 99–108 (EDAKNDKTED). Disordered regions lie at residues 99 to 138 (EDAK…SVKP) and 209 to 235 (RVKK…KRRR). 3 positions are modified to phosphoserine: Ser113, Ser116, and Ser122. The segment covering 217–235 (TKNERRINQRKANDNKRRR) has biased composition (basic and acidic residues).

The protein belongs to the RRP17 family.

Its subcellular location is the nucleus. It is found in the nucleolus. In terms of biological role, essential protein involved in ribosomal RNA processing. This is Ribosomal RNA-processing protein 17 (RRP17) from Saccharomyces cerevisiae (strain ATCC 204508 / S288c) (Baker's yeast).